The primary structure comprises 321 residues: Genome polyprotein (321 aa).

The Cytoplasmic segment spans residues 1 to 52; it reads RNLGKVIDTLTCGFADLMGYIPLVGAPLGGAARALAHGVRVLEDGVNYATGN. Positions 6–57 are interaction with APOA2; the sequence is VIDTLTCGFADLMGYIPLVGAPLGGAARALAHGVRVLEDGVNYATGNLPGCS. Residues 48–51 are important for lipid droplets localization; sequence YATG. A helical membrane pass occupies residues 53–73; sequence LPGCSFSLFLLALLSCLTVPA. The propeptide at 62 to 75 is ER anchor for the core protein, removed in mature form by host signal peptidase; that stretch reads LLALLSCLTVPASA. Residues 74–242 lie on the Lumenal side of the membrane; that stretch reads SAYQVRNSTG…AGAHWGVLAG (169 aa). 3 N-linked (GlcNAc...) asparagine; by host glycosylation sites follow: N80, N93, and N118. Residues 149–180 form an important for fusion region; that stretch reads LVGSATLCSALYVGDLCGSIFLVGQLFTFSPR. N-linked (GlcNAc...) asparagine; by host glycosylation is present at N189. The chain crosses the membrane as a helical span at residues 243-263; the sequence is IAYFSMVGNWAKVLVVLLLFA. Residues 264–321 are Lumenal-facing; the sequence is GVDAETTVTGGSAAHGALGIASLFNQGARQNIQLINTNGSWHINSTALNCNDSLNTGW. Positions 268–294 are HVR1; it reads ETTVTGGSAAHGALGIASLFNQGARQN. N-linked (GlcNAc...) (high mannose) asparagine; by host glycosylation is found at N301, N307, and N314.

Belongs to the hepacivirus polyprotein family. In terms of assembly, homooligomer. Interacts with E1 (via C-terminus). Interacts with the non-structural protein 5A. Interacts (via N-terminus) with host STAT1 (via SH2 domain); this interaction results in decreased STAT1 phosphorylation and ubiquitin-mediated proteasome-dependent STAT1 degradation, leading to decreased IFN-stimulated gene transcription. Interacts with host STAT3; this interaction constitutively activates STAT3. Interacts with host LTBR receptor. Interacts with host TNFRSF1A receptor and possibly induces apoptosis. Interacts with host HNRPK. Interacts with host YWHAE. Interacts with host UBE3A/E6AP. Interacts with host DDX3X. Interacts with host APOA2. Interacts with host RXRA protein. Interacts with host SP110 isoform 3/Sp110b; this interaction sequesters the transcriptional corepressor SP110 away from the nucleus. Interacts with host CREB3 nuclear transcription protein; this interaction triggers cell transformation. Interacts with host ACY3. Interacts with host C1QR1. Interacts with host RBM24; this interaction, which enhances the interaction of the mature core protein with 5'-UTR, may inhibit viral translation and favor replication. Interacts with host EIF2AK2/PKR; this interaction induces the autophosphorylation of EIF2AK2. Part of the viral assembly initiation complex composed of NS2, E1, E2, NS3, NS4A, NS5A and the mature core protein. Forms a heterodimer with envelope glycoprotein E2. Interacts with mature core protein. Interacts with protease NS2. The heterodimer E1/E2 interacts with host CLDN1; this interaction plays a role in viral entry into host cell. Interacts with host SPSB2 (via C-terminus). Part of the viral assembly initiation complex composed of NS2, E1, E2, NS3, NS4A, NS5A and the mature core protein. As to quaternary structure, forms a heterodimer with envelope glycoprotein E1. Interacts with host CD81 and SCARB1 receptors; these interactions play a role in viral entry into host cell. Interacts with host EIF2AK2/PKR; this interaction inhibits EIF2AK2 and probably allows the virus to evade the innate immune response. Interacts with host CD209/DC-SIGN and CLEC4M/DC-SIGNR. Interact with host SPCS1; this interaction is essential for viral particle assembly. Interacts with protease NS2. The heterodimer E1/E2 interacts with host CLDN1; this interaction plays a role in viral entry into host cell. Part of the viral assembly initiation complex composed of NS2, E1, E2, NS3, NS4A, NS5A and the mature core protein. In terms of processing, specific enzymatic cleavages in vivo yield mature proteins. The structural proteins, core, E1, E2 and p7 are produced by proteolytic processing by host signal peptidases. The core protein precursor is synthesized as a 23 kDa, which is retained in the ER membrane through the hydrophobic signal peptide. Cleavage by the signal peptidase releases the 21 kDa mature core protein. The cleavage of the core protein precursor occurs between aminoacids 176 and 188 but the exact cleavage site is not known. Some degraded forms of the core protein appear as well during the course of infection. The other proteins (p7, NS2, NS3, NS4A, NS4B, NS5A and NS5B) are cleaved by the viral proteases. Autoprocessing between NS2 and NS3 is mediated by the NS2 cysteine protease catalytic domain and regulated by the NS3 N-terminal domain. Phosphorylated by host PKC and PKA. Post-translationally, ubiquitinated; mediated by UBE3A and leading to core protein subsequent proteasomal degradation. In terms of processing, highly N-glycosylated.

The protein localises to the host endoplasmic reticulum membrane. Its subcellular location is the host mitochondrion membrane. It localises to the virion. It is found in the host cytoplasm. The protein resides in the host nucleus. The protein localises to the host lipid droplet. Its subcellular location is the virion membrane. Packages viral RNA to form a viral nucleocapsid, and promotes virion budding. Participates in the viral particle production as a result of its interaction with the non-structural protein 5A. Binds RNA and may function as a RNA chaperone to induce the RNA structural rearrangements taking place during virus replication. Modulates viral translation initiation by interacting with viral IRES and 40S ribosomal subunit. Affects various cell signaling pathways, host immunity and lipid metabolism. Prevents the establishment of cellular antiviral state by blocking the interferon-alpha/beta (IFN-alpha/beta) and IFN-gamma signaling pathways and by blocking the formation of phosphorylated STAT1 and promoting ubiquitin-mediated proteasome-dependent degradation of STAT1. Activates STAT3 leading to cellular transformation. Regulates the activity of cellular genes, including c-myc and c-fos. May repress the promoter of p53, and sequester CREB3 and SP110 isoform 3/Sp110b in the cytoplasm. Represses cell cycle negative regulating factor CDKN1A, thereby interrupting an important check point of normal cell cycle regulation. Targets transcription factors involved in the regulation of inflammatory responses and in the immune response: suppresses TNF-induced NF-kappa-B activation, and activates AP-1. Binds to dendritic cells (DCs) via C1QR1, resulting in down-regulation of T-lymphocytes proliferation. Alters lipid metabolism by interacting with hepatocellular proteins involved in lipid accumulation and storage. Induces up-regulation of FAS promoter activity, and thereby contributes to the increased triglyceride accumulation in hepatocytes (steatosis). In terms of biological role, forms a heterodimer with envelope glycoprotein E2, which mediates virus attachment to the host cell, virion internalization through clathrin-dependent endocytosis and fusion with host membrane. Fusion with the host cell is most likely mediated by both E1 and E2, through conformational rearrangements of the heterodimer required for fusion rather than a classical class II fusion mechanism. E1/E2 heterodimer binds host apolipoproteins such as APOB and ApoE thereby forming a lipo-viro-particle (LVP). APOE associated to the LVP allows the initial virus attachment to cell surface receptors such as the heparan sulfate proteoglycans (HSPGs), syndecan-1 (SDC1), syndecan-1 (SDC2), the low-density lipoprotein receptor (LDLR) and scavenger receptor class B type I (SCARB1). The cholesterol transfer activity of SCARB1 allows E2 exposure and binding of E2 to SCARB1 and the tetraspanin CD81. E1/E2 heterodimer binding on CD81 activates the epithelial growth factor receptor (EGFR) signaling pathway. Diffusion of the complex E1-E2-EGFR-SCARB1-CD81 to the cell lateral membrane allows further interaction with Claudin 1 (CLDN1) and occludin (OCLN) to finally trigger HCV entry. Its function is as follows. Forms a heterodimer with envelope glycoprotein E1, which mediates virus attachment to the host cell, virion internalization through clathrin-dependent endocytosis and fusion with host membrane. Fusion with the host cell is most likely mediated by both E1 and E2, through conformational rearrangements of the heterodimer required for fusion rather than a classical class II fusion mechanism. The interaction between envelope glycoprotein E2 and host apolipoprotein E/APOE allows the proper assembly, maturation and infectivity of the viral particles. This interaction is probably promoted via the up-regulation of cellular autophagy by the virus. E1/E2 heterodimer binds host apolipoproteins such as APOB and APOE thereby forming a lipo-viro-particle (LVP). APOE associated to the LVP allows the initial virus attachment to cell surface receptors such as the heparan sulfate proteoglycans (HSPGs), syndecan-1 (SDC1), syndecan-1 (SDC2), the low-density lipoprotein receptor (LDLR) and scavenger receptor class B type I (SCARB1). The cholesterol transfer activity of SCARB1 allows E2 exposure and binding of E2 to SCARB1 and the tetraspanin CD81. E1/E2 heterodimer binding on CD81 activates the epithelial growth factor receptor (EGFR) signaling pathway. Diffusion of the complex E1-E2-EGFR-SCARB1-CD81 to the cell lateral membrane allows further interaction with Claudin 1 (CLDN1) and occludin (OCLN) to finally trigger HCV entry. Inhibits host EIF2AK2/PKR activation, preventing the establishment of an antiviral state. Viral ligand for CD209/DC-SIGN and CLEC4M/DC-SIGNR, which are respectively found on dendritic cells (DCs), and on liver sinusoidal endothelial cells and macrophage-like cells of lymph node sinuses. These interactions allow the capture of circulating HCV particles by these cells and subsequent facilitated transmission to permissive cells such as hepatocytes and lymphocyte subpopulations. This is Genome polyprotein from Homo sapiens (Human).